A 196-amino-acid polypeptide reads, in one-letter code: MSSLAQASKPSAQRWGLGALIVLAILAVQASWLYFDGRIAMCECGTIKLWSGSLMTENSQHISDWYTLSHIIHGFLFYWLFTVIAPKAPLGLRLAAAVGIEAVWELVENSNFIIERYRANTSSVDYFGDSIVNSVADTVAALIGFLIAAKLPTKITVAIALFFEVLALIVIRDNLTLNVIMLLHPFEFIKQWQSGL.

The next 4 membrane-spanning stretches (helical) occupy residues 15–35 (WGLGALIVLAILAVQASWLYF), 65–85 (WYTLSHIIHGFLFYWLFTVIA), 127–147 (FGDSIVNSVADTVAALIGFLI), and 151–171 (LPTKITVAIALFFEVLALIVI).

The protein belongs to the UPF0314 family.

The protein localises to the cell membrane. This is UPF0314 protein Oant_0840 from Brucella anthropi (strain ATCC 49188 / DSM 6882 / CCUG 24695 / JCM 21032 / LMG 3331 / NBRC 15819 / NCTC 12168 / Alc 37) (Ochrobactrum anthropi).